The chain runs to 879 residues: Alanine--tRNA ligase (879 aa).

4 residues coordinate Zn(2+): H566, H570, C668, and H672.

It belongs to the class-II aminoacyl-tRNA synthetase family. Zn(2+) is required as a cofactor.

Its subcellular location is the cytoplasm. It carries out the reaction tRNA(Ala) + L-alanine + ATP = L-alanyl-tRNA(Ala) + AMP + diphosphate. Its function is as follows. Catalyzes the attachment of alanine to tRNA(Ala) in a two-step reaction: alanine is first activated by ATP to form Ala-AMP and then transferred to the acceptor end of tRNA(Ala). Also edits incorrectly charged Ser-tRNA(Ala) and Gly-tRNA(Ala) via its editing domain. This Clostridium perfringens (strain 13 / Type A) protein is Alanine--tRNA ligase.